The chain runs to 596 residues: Nuclear receptor subfamily 2 group C member 2 (596 aa).

Residue Ser-19 is modified to Phosphoserine; by MAPK. Ser-46 is modified (phosphoserine). Ser-55 and Ser-68 each carry phosphoserine; by MAPK. Ser-98 carries the post-translational modification Phosphoserine. The nuclear receptor DNA-binding region spans 114–189; the sequence is VEYCVVCGDK…MGMKMESVQS (76 aa). NR C4-type zinc fingers lie at residues 117–137 and 153–177; these read CVVC…CEGC and CRSS…LKKC. A Glycyl lysine isopeptide (Lys-Gly) (interchain with G-Cter in SUMO2) cross-link involves residue Lys-192. Ser-219 is modified (phosphoserine). The residue at position 231 (Lys-231) is an N6-acetyllysine. Positions 341-583 constitute an NR LBD domain; the sequence is GSIHVISRDQ…SIIPYILKME (243 aa).

It belongs to the nuclear hormone receptor family. NR2 subfamily. Homodimer; can bind DNA as homodimer. Heterodimer; binds DNA as a heterodimer with NR2C1 required for chromatin remodeling and for binding to promoter regions such as globin DR1 repeats. Interacts with NR2C2AP; the interaction represses selective NR2C2-mediated transcriptional activity. Interacts with PCAF; the interaction preferentially occurs on the non-phosphorylated form and induces NR2C2-mediated transactivation activity and does not require the ligand-binding domain. Interacts (MAPK-mediated phosphorylated form) with NRIP1; the interaction promotes repression of NR2C2-mediated activity. Interacts with NLRP10. Interacts (via ligand-binding region) with transcriptional corepressor JAZF1; the interaction promotes NR2C2-mediated transcriptional repression. Post-translationally, phosphorylation on Ser-19 and Ser-68 is an important regulator of NR2C2-mediated transcriptional activity. Phosphorylation on these residues recruits the corepressor, NRIP1, leading to transcripional repression, whereas the non-phosphorylated form preferentially recruits the coactivator, PCAF. Expressed in hepatocytes. Also expressed in granule cells of the hippocampus and the cerebellum.

It localises to the nucleus. Its function is as follows. Orphan nuclear receptor that can act as a repressor or activator of transcription. An important repressor of nuclear receptor signaling pathways such as retinoic acid receptor, retinoid X, vitamin D3 receptor, thyroid hormone receptor and estrogen receptor pathways. May regulate gene expression during the late phase of spermatogenesis. Activates transcriptional activity of LHCG and is antagonist of PPARA-mediated transactivation. Together with NR2C1, forms the core of the DRED (direct repeat erythroid-definitive) complex that represses embryonic and fetal globin transcription including that of GATA1. Binds to hormone response elements (HREs) consisting of two 5'-AGGTCA-3' half site direct repeat consensus sequences. Plays a fundamental role in early embryonic development and embryonic stem cells. Required for normal spermatogenesis and cerebellum development. Appears to be important for neurodevelopmentally regulated behavior. This chain is Nuclear receptor subfamily 2 group C member 2 (Nr2c2), found in Rattus norvegicus (Rat).